We begin with the raw amino-acid sequence, 65 residues long: Large ribosomal subunit protein bL35 (65 aa).

Belongs to the bacterial ribosomal protein bL35 family.

The protein is Large ribosomal subunit protein bL35 of Thermotoga maritima (strain ATCC 43589 / DSM 3109 / JCM 10099 / NBRC 100826 / MSB8).